A 234-amino-acid chain; its full sequence is Melanoregulin (234 aa).

Residues 215 to 234 form a disordered region; the sequence is MNQNISGGEDEDEDESEPDD. The segment covering 222–234 has biased composition (acidic residues); that stretch reads GEDEDEDESEPDD.

It belongs to the melanoregulin family.

The protein resides in the apical cell membrane. It localises to the melanosome membrane. The protein localises to the lysosome membrane. Its subcellular location is the cytoplasmic vesicle membrane. In terms of biological role, probably functions as a cargo-recognition protein that couples cytoplasmic vesicles to the transport machinery. Contributes to retrograde melanosome transport from the cell periphery to the center. Overexpression causes accumulation of late endosomes and/or lysosomes at the microtubule organising center (MTOC) at the center of the cell. Probably binds cholesterol and requires the presence of cholesterol in membranes to function in microtubule-mediated retrograde organelle transport. Binds phosphatidylinositol 3-phosphate, phosphatidylinositol 4-phosphate, phosphatidylinositol 5-phosphate and phosphatidylinositol 3,5-bisphosphate. In Danio rerio (Zebrafish), this protein is Melanoregulin (mreg).